The sequence spans 459 residues: Argininosuccinate lyase (459 aa).

It belongs to the lyase 1 family. Argininosuccinate lyase subfamily.

The protein localises to the cytoplasm. The catalysed reaction is 2-(N(omega)-L-arginino)succinate = fumarate + L-arginine. It functions in the pathway amino-acid biosynthesis; L-arginine biosynthesis; L-arginine from L-ornithine and carbamoyl phosphate: step 3/3. In Methylobacterium radiotolerans (strain ATCC 27329 / DSM 1819 / JCM 2831 / NBRC 15690 / NCIMB 10815 / 0-1), this protein is Argininosuccinate lyase.